A 390-amino-acid polypeptide reads, in one-letter code: Immunoglobulin mu Fc receptor (390 aa).

The signal sequence occupies residues 1–16 (MDFWLWPLYFLPVSGA). Residues 17–251 (LRILPEVKVE…GSQSGREGQG (235 aa)) are Extracellular-facing. Residues 23 to 123 (VKVEGELGGS…KTQKVTLNVH (101 aa)) enclose the Ig-like domain. Residues 33–115 (VTIKCPLPEM…AGMNTDRGKT (83 aa)) form a CDR4 region. 2 cysteine pairs are disulfide-bonded: Cys-37/Cys-104 and Cys-49/Cys-58. A CDR1 region spans residues 40–45 (PEMHVR). The segment at 59-70 (GTVVSTTNFIKA) is CDR2. A Phosphothreonine modification is found at Thr-92. The segment at 106–115 (AGMNTDRGKT) is CDR3. A disordered region spans residues 166 to 204 (PAQRGKVPPVHHSSPTTQITHRPRVSRASSVAGDKPRTF). The helical transmembrane segment at 252–272 (FHILIPTILGLFLLALLGLVV) threads the bilayer. Over 273-390 (KRAVERRKAL…DSDDYINVPA (118 aa)) the chain is Cytoplasmic. Composition is skewed to low complexity over residues 293–311 (MRALESSQRPRGSPRPRSQ) and 325–334 (ADAAGTGEAP). Residues 293–348 (MRALESSQRPRGSPRPRSQNNIYSACPRRARGADAAGTGEAPVPGPGAPLPPAPLQ) are disordered. Pro residues predominate over residues 335–346 (VPGPGAPLPPAP).

As to quaternary structure, interacts (via Ig-like domain) with IGHM (via CH4/Cmu4 domain), both secreted and membrane-bound IgM; the interaction is glycan-independent and multivalent theoretically involving up to eight binding sites for the IgM pentamer. Post-translationally, phosphorylated on both Tyr and Ser residues. In terms of processing, O-glycosylated. Sialylated. O-linked glycans regulate trafficking to the plasma membrane. As to expression, expressed by CD19-positive B cells and CD4-positive and CD8-positive T cell populations in primary and secondary lymphoid tissues (at protein level). Among B cell subsets, detected in a subset of bone marrow pro- and pre-B cells, in most follicular and memory B cells and in a small subset of germinal center B cells (at protein level). Expressed at lower levels in CD56-positive NK cells (at protein level). Expressed in lymph nodes, lung, thymus and kidneys. Very weak expression detected in spleen, liver, heart, and salivary gland.

The protein resides in the cell membrane. It is found in the early endosome membrane. It localises to the golgi apparatus. Its subcellular location is the trans-Golgi network membrane. The protein localises to the lysosome membrane. The protein resides in the secreted. Functionally, high-affinity Fc receptor for immunoglobulin M (IgM), both secreted and membrane-bound IgM. Primarily regulates IgM transport and homeostasis. In lymphoid cells, enables exocytosis of membrane-bound IgM on the plasma membrane as well as endocytosis of IgM-antigen complexes toward lysosomes for degradation. In mucosal epithelium, mediates retrotranscytosis of antigen-IgM complexes across mucosal M cells toward antigen-presenting cells in mucosal lymphoid tissues. Triggers costimulatory signaling and mediates most of IgM effector functions involved in B cell development and primary immune response to infection. Likely limits tonic IgM BCR signaling to self-antigens for proper negative selection of autoreactive B cells in the bone marrow and for the maintenance of regulatory B cell pool in peripheral lymphoid organs. Mediates antibody responses to T cell-dependent and T cell-independent antigens and promotes induction of an efficient neutralizing IgG response. Engages in cross-talk with antigen-receptor signaling via the non-canonical NF-kappa-B, MAP kinases and calcium signaling pathways. This is Immunoglobulin mu Fc receptor from Homo sapiens (Human).